The chain runs to 459 residues: Putrescine aminotransferase (459 aa).

Pyridoxal 5'-phosphate is bound by residues 150–151 and Q274; that span reads GT. Residue K300 is modified to N6-(pyridoxal phosphate)lysine. T332 is a pyridoxal 5'-phosphate binding site.

This sequence belongs to the class-III pyridoxal-phosphate-dependent aminotransferase family. Putrescine aminotransferase subfamily. Pyridoxal 5'-phosphate serves as cofactor.

It carries out the reaction an alkane-alpha,omega-diamine + 2-oxoglutarate = an omega-aminoaldehyde + L-glutamate. The enzyme catalyses putrescine + 2-oxoglutarate = 1-pyrroline + L-glutamate + H2O. It catalyses the reaction cadaverine + 2-oxoglutarate = 5-aminopentanal + L-glutamate. It participates in amine and polyamine degradation; putrescine degradation; 4-aminobutanal from putrescine (transaminase route): step 1/1. Functionally, catalyzes the aminotransferase reaction from putrescine to 2-oxoglutarate, leading to glutamate and 4-aminobutanal, which spontaneously cyclizes to form 1-pyrroline. This is the first step in one of two pathways for putrescine degradation, where putrescine is converted into 4-aminobutanoate (gamma-aminobutyrate or GABA) via 4-aminobutanal. Also functions as a cadaverine transaminase in a a L-lysine degradation pathway to succinate that proceeds via cadaverine, glutarate and L-2-hydroxyglutarate. The polypeptide is Putrescine aminotransferase (Klebsiella pneumoniae (strain 342)).